The chain runs to 303 residues: MDVEKFVENAIKEIRERVKDGKAIIALSGGVDSSVCTVLAHKALGDRLIPVFVDTGLMREGEPEKIKEIFGNMGLVFIDAKEEFFKALKGVTDPEEKRKVIGELFVRIFERVAEEHNAEYLIQGTIYPDIIESQGGIKSHHNVGGFPTSYKFKDVIEPLRELYKDEVREVARYLGLPKEISERMPFPGPGLAVRIVGEVTPEKVEIVRKANKIVEEELADYDKWQCFAALIGKATGVKGDVRVWGYIIAVRAVESRDGMTADPIKIDYDRLRRIALRITGEIDKVSRVVYDITPKPPATIEYE.

One can recognise a GMPS ATP-PPase domain in the interval 1 to 183; the sequence is MDVEKFVENA…LGLPKEISER (183 aa). 28 to 34 serves as a coordination point for ATP; sequence SGGVDSS.

Heterodimer composed of a glutamine amidotransferase subunit (A) and a GMP-binding subunit (B).

The enzyme catalyses XMP + L-glutamine + ATP + H2O = GMP + L-glutamate + AMP + diphosphate + 2 H(+). It functions in the pathway purine metabolism; GMP biosynthesis; GMP from XMP (L-Gln route): step 1/1. Catalyzes the synthesis of GMP from XMP. The polypeptide is GMP synthase [glutamine-hydrolyzing] subunit B (guaAB) (Archaeoglobus fulgidus (strain ATCC 49558 / DSM 4304 / JCM 9628 / NBRC 100126 / VC-16)).